We begin with the raw amino-acid sequence, 205 residues long: MAYEKAEWRPVTGLGKQVASGEIKSIDQVLESGRPIKEPEIVDMFLPDLEDEVLDIAMMQRMTDSGRRVQFRAVVIVGNRNGYIGFGQGKDVQVGDAIKKAITKAKMNLVKVRRGCGSWECGCAVLHSIPMQVEGTAGSVRVTLKPAPQGIGLVTGDISKKVLELAGIKDAWTFARGQTRTTINFAKATFNALKETNMIRTGRSE.

In terms of domain architecture, S5 DRBM spans 49 to 112 (LEDEVLDIAM…TKAKMNLVKV (64 aa)).

It belongs to the universal ribosomal protein uS5 family. In terms of assembly, part of the 30S ribosomal subunit. Contacts protein S4.

In terms of biological role, with S4 and S12 plays an important role in translational accuracy. The sequence is that of Small ribosomal subunit protein uS5 from Methanoregula boonei (strain DSM 21154 / JCM 14090 / 6A8).